A 272-amino-acid polypeptide reads, in one-letter code: Imidazole glycerol phosphate synthase subunit HisF (272 aa).

Active-site residues include Asp11 and Asp130.

This sequence belongs to the HisA/HisF family. In terms of assembly, heterodimer of HisH and HisF.

It is found in the cytoplasm. It carries out the reaction 5-[(5-phospho-1-deoxy-D-ribulos-1-ylimino)methylamino]-1-(5-phospho-beta-D-ribosyl)imidazole-4-carboxamide + L-glutamine = D-erythro-1-(imidazol-4-yl)glycerol 3-phosphate + 5-amino-1-(5-phospho-beta-D-ribosyl)imidazole-4-carboxamide + L-glutamate + H(+). It functions in the pathway amino-acid biosynthesis; L-histidine biosynthesis; L-histidine from 5-phospho-alpha-D-ribose 1-diphosphate: step 5/9. Functionally, IGPS catalyzes the conversion of PRFAR and glutamine to IGP, AICAR and glutamate. The HisF subunit catalyzes the cyclization activity that produces IGP and AICAR from PRFAR using the ammonia provided by the HisH subunit. The polypeptide is Imidazole glycerol phosphate synthase subunit HisF (Methanococcus maripaludis (strain C7 / ATCC BAA-1331)).